A 419-amino-acid polypeptide reads, in one-letter code: F-box/LRR-repeat protein At1g67190 (419 aa).

Residues M1–A48 enclose the F-box domain. LRR repeat units lie at residues Y53–M82, W96–G124, L133–S157, Y158–S183, E185–G209, H245–H272, F273–D297, D301–Y326, and I356–G381.

The chain is F-box/LRR-repeat protein At1g67190 from Arabidopsis thaliana (Mouse-ear cress).